The following is a 418-amino-acid chain: Tyrosine--tRNA ligase 1 (418 aa).

Y34 contacts L-tyrosine. Residues 39–48 (PTADSLHIGH) carry the 'HIGH' region motif. L-tyrosine contacts are provided by Y169 and Q173. The 'KMSKS' region signature appears at 230 to 234 (KFGKT). K233 contributes to the ATP binding site. Residues 352–418 (TVLIDLLVES…GKKKYFLIRY (67 aa)) enclose the S4 RNA-binding domain.

It belongs to the class-I aminoacyl-tRNA synthetase family. TyrS type 1 subfamily. Homodimer.

The protein localises to the cytoplasm. The catalysed reaction is tRNA(Tyr) + L-tyrosine + ATP = L-tyrosyl-tRNA(Tyr) + AMP + diphosphate + H(+). Functionally, catalyzes the attachment of tyrosine to tRNA(Tyr) in a two-step reaction: tyrosine is first activated by ATP to form Tyr-AMP and then transferred to the acceptor end of tRNA(Tyr). This Bacillus cereus (strain ATCC 14579 / DSM 31 / CCUG 7414 / JCM 2152 / NBRC 15305 / NCIMB 9373 / NCTC 2599 / NRRL B-3711) protein is Tyrosine--tRNA ligase 1.